We begin with the raw amino-acid sequence, 371 residues long: tRNA-specific 2-thiouridylase MnmA (371 aa).

Residues 7–14 (GLSGGVDS) and methionine 33 contribute to the ATP site. Residues 103–105 (NPD) are interaction with target base in tRNA. Cysteine 108 (nucleophile) is an active-site residue. A disulfide bridge connects residues cysteine 108 and cysteine 201. Glycine 133 contributes to the ATP binding site. Positions 151-153 (KDQ) are interaction with tRNA. Cysteine 201 serves as the catalytic Cysteine persulfide intermediate. The segment at 308–309 (RY) is interaction with tRNA.

This sequence belongs to the MnmA/TRMU family.

Its subcellular location is the cytoplasm. It carries out the reaction S-sulfanyl-L-cysteinyl-[protein] + uridine(34) in tRNA + AH2 + ATP = 2-thiouridine(34) in tRNA + L-cysteinyl-[protein] + A + AMP + diphosphate + H(+). Functionally, catalyzes the 2-thiolation of uridine at the wobble position (U34) of tRNA, leading to the formation of s(2)U34. This is tRNA-specific 2-thiouridylase MnmA from Mycoplasmopsis pulmonis (strain UAB CTIP) (Mycoplasma pulmonis).